The primary structure comprises 160 residues: Dihydrofolate reductase (160 aa).

In terms of domain architecture, DHFR spans 1 to 160 (MLIAIWAMTQ…NVNYYRKKQQ (160 aa)). 5–7 (IWA) contributes to the substrate binding site. NADP(+) is bound by residues 6–7 (WA) and 14–19 (IGNNNT). Glu27 is a substrate binding site. 43–46 (GRKT) lines the NADP(+) pocket. Residue Arg57 participates in substrate binding. NADP(+)-binding positions include 62–65 (LSKD) and 101–106 (CGGKSV). Ser120 is a binding site for substrate.

Belongs to the dihydrofolate reductase family.

It carries out the reaction (6S)-5,6,7,8-tetrahydrofolate + NADP(+) = 7,8-dihydrofolate + NADPH + H(+). It participates in cofactor biosynthesis; tetrahydrofolate biosynthesis; 5,6,7,8-tetrahydrofolate from 7,8-dihydrofolate: step 1/1. Key enzyme in folate metabolism. Catalyzes an essential reaction for de novo glycine and purine synthesis, and for DNA precursor synthesis. This Mycoplasma genitalium (strain ATCC 33530 / DSM 19775 / NCTC 10195 / G37) (Mycoplasmoides genitalium) protein is Dihydrofolate reductase (folA).